Reading from the N-terminus, the 140-residue chain is Large ribosomal subunit protein uL22c (140 aa).

It belongs to the universal ribosomal protein uL22 family. In terms of assembly, part of the 50S ribosomal subunit.

It is found in the plastid. It localises to the chloroplast. This protein binds specifically to 23S rRNA. In terms of biological role, the globular domain of the protein is located near the polypeptide exit tunnel on the outside of the subunit, while an extended beta-hairpin is found that lines the wall of the exit tunnel in the center of the 70S ribosome. This is Large ribosomal subunit protein uL22c (rpl22) from Calycanthus floridus var. glaucus (Eastern sweetshrub).